The sequence spans 1704 residues: Phospholipid-transporting ATPase ABCA3 (1704 aa).

A glycan (N-linked (GlcNAc...) asparagine) is linked at asparagine 14. The helical transmembrane segment at 22–42 (VLVTVLELFLPLLFSGILIWL) threads the bilayer. N-linked (GlcNAc...) asparagine glycosylation is found at asparagine 53, asparagine 124, asparagine 140, and asparagine 228. 6 helical membrane-spanning segments follow: residues 261 to 283 (YQLP…RAVV), 307 to 327 (AWFL…TLLF), 344 to 364 (SLVL…SFMV), 373 to 393 (IAAA…FFVA), 405 to 425 (LLSC…IGKF), and 447 to 467 (FCFG…GLVT). The ABC transporter 1 domain occupies 530 to 763 (IKIKHLSKVF…YGAGYHMTLV (234 aa)). Position 566–573 (566–573 (GHNGAGKT)) interacts with ATP. A glycan (N-linked (GlcNAc...) asparagine) is linked at asparagine 620. The next 7 membrane-spanning stretches (helical) occupy residues 925-945 (MVAA…LAIH), 1100-1120 (IALN…ILAV), 1144-1164 (SALL…LVVF), 1183-1203 (LLLM…SFFF), 1213-1233 (LTIF…IMRI), 1245-1265 (LDHV…SNFY), and 1310-1330 (MAAS…NLLW). Asparagine 1350 carries an N-linked (GlcNAc...) asparagine glycan. Residues 1381–1614 (LIINELSKVY…FGSGYSLQAK (234 aa)) form the ABC transporter 2 domain. Residue 1416–1423 (GFNGAGKT) participates in ATP binding.

This sequence belongs to the ABC transporter superfamily. ABCA family. As to quaternary structure, homooligomer; disulfide-linked. N-glycosylated. Localization at intracellular vesicles is accompanied by processing of oligosaccharide from high mannose type to complex type. N-linked glycosylation at Asn-124 and Asn-140 is required for stability and efficient anterograde trafficking and prevents from proteasomal degradation. In terms of processing, proteolytically cleaved by CTSL and to a lower extent by CTSB within multivesicular bodies (MVB) and lamellar bodies (LB) leading to a mature form of 150 kDa. As to expression, highly expressed in the lung and moderately expressed in the kidney, adipose, macrophage, and spleen.

The protein localises to the endosome. Its subcellular location is the multivesicular body membrane. The protein resides in the cytoplasmic vesicle membrane. It is found in the late endosome membrane. It localises to the lysosome membrane. It carries out the reaction a 1,2-diacyl-sn-glycero-3-phospho-(1'-sn-glycerol)(in) + ATP + H2O = a 1,2-diacyl-sn-glycero-3-phospho-(1'-sn-glycerol)(out) + ADP + phosphate + H(+). It catalyses the reaction a 1,2-diacyl-sn-glycero-3-phosphocholine(in) + ATP + H2O = a 1,2-diacyl-sn-glycero-3-phosphocholine(out) + ADP + phosphate + H(+). The catalysed reaction is ATP + H2O + phospholipidSide 1 = ADP + phosphate + phospholipidSide 2.. The enzyme catalyses ATP + H2O + xenobioticSide 1 = ADP + phosphate + xenobioticSide 2.. It carries out the reaction 1,2-dihexadecanoyl-sn-glycero-3-phosphocholine(in) + ATP + H2O = 1,2-dihexadecanoyl-sn-glycero-3-phosphocholine(out) + ADP + phosphate + H(+). It catalyses the reaction cholesterol(in) + ATP + H2O = cholesterol(out) + ADP + phosphate + H(+). In terms of biological role, catalyzes the ATP-dependent transport of phospholipids such as phosphatidylcholine and phosphoglycerol from the cytoplasm into the lumen side of lamellar bodies, in turn participates in the lamellar bodies biogenesis and homeostasis of pulmonary surfactant. Transports preferentially phosphatidylcholine containing short acyl chains. In addition plays a role as an efflux transporter of miltefosine across macrophage membranes and free cholesterol (FC) through intralumenal vesicles by removing FC from the cell as a component of surfactant and protects cells from free cholesterol toxicity. This Mus musculus (Mouse) protein is Phospholipid-transporting ATPase ABCA3 (Abca3).